Consider the following 368-residue polypeptide: Glutamate 5-kinase (368 aa).

Lys-13 is an ATP binding site. Positions 54, 141, and 153 each coordinate substrate. Ser-173–Asp-174 contributes to the ATP binding site. In terms of domain architecture, PUA spans Lys-278–Pro-355.

Belongs to the glutamate 5-kinase family.

The protein localises to the cytoplasm. The enzyme catalyses L-glutamate + ATP = L-glutamyl 5-phosphate + ADP. It participates in amino-acid biosynthesis; L-proline biosynthesis; L-glutamate 5-semialdehyde from L-glutamate: step 1/2. Functionally, catalyzes the transfer of a phosphate group to glutamate to form L-glutamate 5-phosphate. The chain is Glutamate 5-kinase from Jannaschia sp. (strain CCS1).